Here is a 770-residue protein sequence, read N- to C-terminus: MDGRNERPTTPVSDFRVGSSEQSQAGVNLEDSSDYRTSNSAESKKGNLSGKSISDLGISNNDNKNVRFTADTDALENDLSSRSTETSDNSKGTDGQGEEDRPARHKRKPKVSFTHLRNNGKDGDDETFIKKIINNLTGNQGGLVPGLAPIPSENENGKDDIEKNNRNEEIPLSDLADASKIVDVHEGDNKEKLEALKLESDVNCTSDGETLGSSSKNSFLAPAVDHFDDYAENNSSDDNEGFIETSTYVPPPSQVKSGVLGSLLKLYQNEDQNSSSIFSDSQAVTTDDEGISSTAGNKDVPVAKRSRLQNLKGKAKKGRMPRLKKRLKTEAKITVHIADILQRHRFILRMCRALMMYGAPTHRLEEYMVMTSRVLEIDGQFLYLPGCMIVSFGDATTRTSEVQLVRCTQGLNLWKLHQVHAVYKRVVHDTLGADEGNALLDQILADTNLYPPWMCVLLYAFCSAMVTPYAFGGDWVNLAISFFMGLCVGSLQFILSQKSYMYSNVFEISASIVVSFCGRAFGSIPRSHICFGAVTQGSLALILPGYIILCGALELQSRSLVAGAVRMFYAIIYSLFLGFGITLGSALFGWMYHNATNEISCPQLISPWFRFLFVPAFTISISLLNQAHISQLPVMVFISCTGYVVTYWAGKHFANSTEFTAALAAFVIGVLGNLYSRIWKGLAVSAMLPAIFVQVPSGIASQNSLLSGLQSANTIVNANETITTSTSDPSSSMSFGMTMIQVCVGISVGLFASSLFVYPFGKKKTGLFSL.

2 disordered regions span residues 1 to 125 (MDGR…DGDD) and 139 to 169 (NQGG…RNEE). Composition is skewed to polar residues over residues 49–63 (SGKS…NNDN) and 78–93 (DLSS…SKGT). Residues 155–169 (ENGKDDIEKNNRNEE) show a composition bias toward basic and acidic residues. A run of 10 helical transmembrane segments spans residues 453-473 (WMCV…AFGG), 475-495 (WVNL…QFIL), 505-525 (VFEI…GSIP), 529-549 (ICFG…YIIL), 568-588 (FYAI…SALF), 604-624 (LISP…ISLL), 629-649 (ISQL…TYWA), 659-679 (FTAA…SRIW), 681-701 (GLAV…GIAS), and 740-760 (IQVC…VYPF).

It belongs to the ThrE exporter (TC 2.A.79) family.

It is found in the membrane. This Saccharomyces cerevisiae (strain YJM789) (Baker's yeast) protein is Pheromone-regulated membrane protein 10 (PRM10).